The sequence spans 264 residues: GTP cyclohydrolase FolE2 (264 aa).

The protein belongs to the GTP cyclohydrolase IV family.

The catalysed reaction is GTP + H2O = 7,8-dihydroneopterin 3'-triphosphate + formate + H(+). Its pathway is cofactor biosynthesis; 7,8-dihydroneopterin triphosphate biosynthesis; 7,8-dihydroneopterin triphosphate from GTP: step 1/1. Its function is as follows. Converts GTP to 7,8-dihydroneopterin triphosphate. The sequence is that of GTP cyclohydrolase FolE2 from Nitratidesulfovibrio vulgaris (strain ATCC 29579 / DSM 644 / CCUG 34227 / NCIMB 8303 / VKM B-1760 / Hildenborough) (Desulfovibrio vulgaris).